A 174-amino-acid polypeptide reads, in one-letter code: Peptide deformylase (174 aa).

2 residues coordinate Fe cation: C96 and H138. The active site involves E139. H142 is a Fe cation binding site.

Belongs to the polypeptide deformylase family. Fe(2+) is required as a cofactor.

The catalysed reaction is N-terminal N-formyl-L-methionyl-[peptide] + H2O = N-terminal L-methionyl-[peptide] + formate. Its function is as follows. Removes the formyl group from the N-terminal Met of newly synthesized proteins. Requires at least a dipeptide for an efficient rate of reaction. N-terminal L-methionine is a prerequisite for activity but the enzyme has broad specificity at other positions. The sequence is that of Peptide deformylase from Helicobacter pylori (strain HPAG1).